The chain runs to 516 residues: Maturase K (516 aa).

Belongs to the intron maturase 2 family. MatK subfamily.

It is found in the plastid. The protein resides in the chloroplast. Usually encoded in the trnK tRNA gene intron. Probably assists in splicing its own and other chloroplast group II introns. The protein is Maturase K of Medeola virginiana (Indian cucumber root).